Reading from the N-terminus, the 990-residue chain is MSDTEKSAQAQPNESAEPSFRYNAKLAQGIEEKWQKIWDDEGTFWAANVNGDLKDGKGHNAEGRPSYFAMDMFPYPSGKGLHVGHPLGYLATDVVSRYHRMKGENVLHAMGYDAFGLPAEQYAVQTGQHPRITTEQNIANMRRQLHRMGLSFDNRRSFATIDPGYVRWTQWIFSRIYDAWYDEDATNPSGSRGCARPISTLVEQFESGKRAIPGFEGKAWADLSEAEQADVLNDFRLAYISKSPVNWCPGLGTVLANEEVTAEGKSERGNFPVFQRELRQWSMRITAYGHRLIEDLDTIDWPEKVKLMQRNWIGESHGASVHFDVETPNGVKDMEIYTTRPDTLFGTTFAVVSPEHHLLEDVPAEWPAETPEDWKGGYATPVEAVKAYRLAAEAKTAKDRVDEAGEKTGLFTGLYAINPITGAKLPLFTADYVLMDYGTGAIMAVPGGDQRDYDFAVKFGLPVIYTVKPLPESGDDLANYEGKAPFVSHDGIVINSSIDATKAKGDSLSLDGLRVDEAIDKVNAWLESAGVGKGTVSYRLRDWLFSRQRYWGEPFPIVYGEDGTPHLLPDEQLPINLPDVPDYSPKTFDPEDAESDPEAPLSRNEDWVKVELDLGDGKKTYYRDTNTMPNWAGSCWYYMRYLDPTDTKHMVEKDEFDYWMGPDHNKTAGKSGGVDLYIGGVEHAVLHLLYSRFWHKVLFDLGYVDSMEPFHKLFNQGMIQAYAYTDDRGQYVPAAEVVEGPADANGEPTFTWNGQHANREFGKMGKSLKNIITPDDMYENYGADTFRLYEMGMGPLAESRPWNTRNVVGSMRFLQRLWRNVIDETTGEVRVTDGELDTKTLKLLNNTIADVTVEMEAMRPNTAIAKLIVLNNHLTSLDAVPRAAVEPLILMLSPIAPHICEELWSKLGHTESLAHADWPKADERYVGQDSVTAVVQIKGKVRAKLEVSPDIDPKELEKMALEAVADRLGGKEPRKVIVKAPKIVSIVPAE.

A 'HIGH' region motif is present at residues 74 to 85 (PYPSGKGLHVGH). Residues 573 to 602 (LPINLPDVPDYSPKTFDPEDAESDPEAPLS) are disordered. A 'KMSKS' region motif is present at residues 763–767 (KMGKS). ATP is bound at residue Lys-766.

This sequence belongs to the class-I aminoacyl-tRNA synthetase family.

The protein resides in the cytoplasm. The catalysed reaction is tRNA(Leu) + L-leucine + ATP = L-leucyl-tRNA(Leu) + AMP + diphosphate. The sequence is that of Leucine--tRNA ligase from Bifidobacterium adolescentis (strain ATCC 15703 / DSM 20083 / NCTC 11814 / E194a).